The sequence spans 345 residues: uncharacterized protein (345 aa).

Residues 1-198 (MDVLSAVLLA…LSEGLLDHEE (198 aa)) enclose the CNNM transmembrane domain. Helical transmembrane passes span 3-23 (VLSA…FVGA) and 95-115 (VPPA…HVLL). CBS domains are found at residues 217–280 (AVPL…PQTV) and 285–342 (VVRP…MRDG). A helical transmembrane segment spans residues 312 to 332 (LALVTADNGSVVGMVALEDVV).

This sequence belongs to the TerC family.

It localises to the cell membrane. This is an uncharacterized protein from Mycobacterium tuberculosis (strain ATCC 25618 / H37Rv).